A 346-amino-acid polypeptide reads, in one-letter code: NADH-ubiquinone oxidoreductase chain 2 (346 aa).

Helical transmembrane passes span Pro3 to Ser23, His25 to Met45, Tyr59 to Met79, Ile96 to Pro116, Ile122 to Leu142, Ile149 to Gly169, Ile178 to Pro198, Leu200 to Ile220, Thr242 to Pro262, Ser274 to Met294, and Ile322 to Leu342.

The protein belongs to the complex I subunit 2 family. Core subunit of respiratory chain NADH dehydrogenase (Complex I) which is composed of 45 different subunits. Interacts with TMEM242.

It localises to the mitochondrion inner membrane. It carries out the reaction a ubiquinone + NADH + 5 H(+)(in) = a ubiquinol + NAD(+) + 4 H(+)(out). Core subunit of the mitochondrial membrane respiratory chain NADH dehydrogenase (Complex I) which catalyzes electron transfer from NADH through the respiratory chain, using ubiquinone as an electron acceptor. Essential for the catalytic activity and assembly of complex I. This chain is NADH-ubiquinone oxidoreductase chain 2, found in Equus caballus (Horse).